Reading from the N-terminus, the 542-residue chain is MARYVFITGGVVSSLGKGIAAAALGALLQARGYRVRLRKLDPYLNVDPGTMSPTQHGEVFVTDDGAETDLDLGHYERFTGRSATKTDNITTGRIYKNIIDKERRGDYLGATVQVIPHVTNEIKDFVIEGNDDYDFVICEIGGTVGDIEAMPFMEAIRQLGNDLPRGTAVYVHLTLMPYIPAAGELKTKPTQHSVKELQALGIHPDILLVRADREIPEAERRKLSLFCNVRPSAVIQALDVANIYDVPIAYHKEGLDDEVLAAFGIEPAPKPRLDPWEEVCNRIRTPEGEVTIAIVGKYTGLKDAYKSLIEALHHGGIANRVKVNLEWIESEVFEKEDPAPYLEKVHGILVPGGFGERGSEGKIHAARFARERKVPYFGICFGMQMAVIEAARNLADVSGASSTEFGPTKEPVVGLMTEWVKGNELQKRTAAGDLGGTMRLGAYKAALKKGTKISDIYGSTDISERHRHRYEVNVDYKDRLENCGLVFSGMSPDGVLPETIEYPDHPWFIGVQYHPELKSRPLDPHPLFASFIEAATEQSRLV.

An amidoligase domain region spans residues 1–265 (MARYVFITGG…DDEVLAAFGI (265 aa)). S13 contacts CTP. S13 contacts UTP. Residues 14–19 (SLGKGI) and D71 contribute to the ATP site. Positions 71 and 139 each coordinate Mg(2+). Residues 146–148 (DIE), 186–191 (KTKPTQ), and K222 contribute to the CTP site. UTP contacts are provided by residues 186–191 (KTKPTQ) and K222. The 251-residue stretch at 291-541 (TIAIVGKYTG…IEAATEQSRL (251 aa)) folds into the Glutamine amidotransferase type-1 domain. G353 is an L-glutamine binding site. Catalysis depends on C380, which acts as the Nucleophile; for glutamine hydrolysis. L-glutamine contacts are provided by residues 381–384 (FGMQ), E404, and R469. Residues H514 and E516 contribute to the active site.

Belongs to the CTP synthase family. Homotetramer.

The catalysed reaction is UTP + L-glutamine + ATP + H2O = CTP + L-glutamate + ADP + phosphate + 2 H(+). It catalyses the reaction L-glutamine + H2O = L-glutamate + NH4(+). It carries out the reaction UTP + NH4(+) + ATP = CTP + ADP + phosphate + 2 H(+). The protein operates within pyrimidine metabolism; CTP biosynthesis via de novo pathway; CTP from UDP: step 2/2. Allosterically activated by GTP, when glutamine is the substrate; GTP has no effect on the reaction when ammonia is the substrate. The allosteric effector GTP functions by stabilizing the protein conformation that binds the tetrahedral intermediate(s) formed during glutamine hydrolysis. Inhibited by the product CTP, via allosteric rather than competitive inhibition. Its function is as follows. Catalyzes the ATP-dependent amination of UTP to CTP with either L-glutamine or ammonia as the source of nitrogen. Regulates intracellular CTP levels through interactions with the four ribonucleotide triphosphates. The polypeptide is CTP synthase (Rhizobium johnstonii (strain DSM 114642 / LMG 32736 / 3841) (Rhizobium leguminosarum bv. viciae)).